The following is a 199-amino-acid chain: Large ribosomal subunit protein eL13B (199 aa).

Phosphothreonine occurs at positions 144 and 152.

It belongs to the eukaryotic ribosomal protein eL13 family. Component of the large ribosomal subunit (LSU). Mature yeast ribosomes consist of a small (40S) and a large (60S) subunit. The 40S small subunit contains 1 molecule of ribosomal RNA (18S rRNA) and 33 different proteins (encoded by 57 genes). The large 60S subunit contains 3 rRNA molecules (25S, 5.8S and 5S rRNA) and 46 different proteins (encoded by 81 genes).

The protein resides in the cytoplasm. In terms of biological role, component of the ribosome, a large ribonucleoprotein complex responsible for the synthesis of proteins in the cell. The small ribosomal subunit (SSU) binds messenger RNAs (mRNAs) and translates the encoded message by selecting cognate aminoacyl-transfer RNA (tRNA) molecules. The large subunit (LSU) contains the ribosomal catalytic site termed the peptidyl transferase center (PTC), which catalyzes the formation of peptide bonds, thereby polymerizing the amino acids delivered by tRNAs into a polypeptide chain. The nascent polypeptides leave the ribosome through a tunnel in the LSU and interact with protein factors that function in enzymatic processing, targeting, and the membrane insertion of nascent chains at the exit of the ribosomal tunnel. This Saccharomyces cerevisiae (strain ATCC 204508 / S288c) (Baker's yeast) protein is Large ribosomal subunit protein eL13B.